Consider the following 73-residue polypeptide: Large ribosomal subunit protein bL31 (73 aa).

The segment covering Lys-34–Ser-43 has biased composition (basic and acidic residues). Residues Lys-34–Met-54 form a disordered region.

It belongs to the bacterial ribosomal protein bL31 family. Type A subfamily. Part of the 50S ribosomal subunit.

Functionally, binds the 23S rRNA. This chain is Large ribosomal subunit protein bL31, found in Rhodopseudomonas palustris (strain BisA53).